The sequence spans 274 residues: Nickel/cobalt efflux system RcnA (274 aa).

Topologically, residues 1–12 (MGEFPTLLQQGN) are periplasmic. Residues 13 to 33 (GWFFIPSAILLGILHGLEPGH) form a helical membrane-spanning segment. The Cytoplasmic portion of the chain corresponds to 34–51 (SKTMMAAFIIAIKGTVKQ). The chain crosses the membrane as a helical span at residues 52–72 (AVMLGLAATLSHTAIVWLIAL). Topologically, residues 73–85 (GGMYLSRAFTAQS) are periplasmic. Residues 86–106 (VEPWLQLISAIIILSTACWMF) form a helical membrane-spanning segment. At 107–174 (WRTWRGEQQW…FDGQTVTNGQ (68 aa)) the chain is on the cytoplasmic side. A compositionally biased stretch (basic and acidic residues) spans 122–141 (HHDHDHDHDHDHDHHGHIHP). A disordered region spans residues 122-143 (HHDHDHDHDHDHDHHGHIHPEG). The chain crosses the membrane as a helical span at residues 175–195 (ILLFGLTGGLIPCPAAITVLL). The Periplasmic segment spans residues 196–209 (ICIQLKAFTLGATM). Residues 210–230 (VLSFSLSLALTLVTVGVGAAI) form a helical membrane-spanning segment. At 231 to 251 (SVQQAAKRWSGFSTLARRAPY) the chain is on the cytoplasmic side. A helical transmembrane segment spans residues 252–272 (FSSILIGLVGVYMGIHGYTGI). At 273 to 274 (MQ) the chain is on the periplasmic side.

It belongs to the NiCoT transporter (TC 2.A.52) family. RcnA subfamily.

The protein localises to the cell inner membrane. Efflux system for nickel and cobalt. The polypeptide is Nickel/cobalt efflux system RcnA (rcnA) (Salmonella paratyphi A (strain ATCC 9150 / SARB42)).